The following is a 351-amino-acid chain: Quinolinate phosphoribosyltransferase [decarboxylating] 2a, mitochondrial (351 aa).

Residues Arg-142, 173 to 175, Arg-197, Lys-207, Glu-240, Asp-267, 299 to 301, and 320 to 322 each bind substrate; these read TRK, SGN, and SGA.

This sequence belongs to the NadC/ModD family. As to expression, expressed in roots and flowers.

The protein resides in the mitochondrion. The enzyme catalyses nicotinate beta-D-ribonucleotide + CO2 + diphosphate = quinolinate + 5-phospho-alpha-D-ribose 1-diphosphate + 2 H(+). It functions in the pathway alkaloid biosynthesis; nicotine biosynthesis. The protein operates within cofactor biosynthesis; NAD(+) biosynthesis; nicotinate D-ribonucleotide from quinolinate: step 1/1. In terms of biological role, involved in the biosynthesis of pyridine alkaloid natural products, leading mainly to the production of anabasine, anatabine, nicotine and nornicotine, effective deterrents against herbivores with antiparasitic and pesticide properties (neurotoxins); nornicotine serves as the precursor in the synthesis of the carcinogen compound N'-nitrosonornicotine (NNN). Involved in the catabolism of quinolinic acid (QA). The chain is Quinolinate phosphoribosyltransferase [decarboxylating] 2a, mitochondrial from Nicotiana tabacum (Common tobacco).